Consider the following 101-residue polypeptide: Large ribosomal subunit protein bL28 (101 aa).

The protein belongs to the bacterial ribosomal protein bL28 family.

This is Large ribosomal subunit protein bL28 from Methylorubrum populi (strain ATCC BAA-705 / NCIMB 13946 / BJ001) (Methylobacterium populi).